The primary structure comprises 109 residues: uncharacterized protein (109 aa).

This sequence to A.calcoaceticus putative ferredoxin.

This is an uncharacterized protein from Escherichia coli O157:H7.